The primary structure comprises 477 residues: Histidine--tRNA ligase (477 aa).

Belongs to the class-II aminoacyl-tRNA synthetase family. As to quaternary structure, homodimer.

Its subcellular location is the cytoplasm. The catalysed reaction is tRNA(His) + L-histidine + ATP = L-histidyl-tRNA(His) + AMP + diphosphate + H(+). The polypeptide is Histidine--tRNA ligase (hisS) (Xanthomonas campestris pv. campestris (strain ATCC 33913 / DSM 3586 / NCPPB 528 / LMG 568 / P 25)).